The primary structure comprises 381 residues: Creatine kinase B-type (381 aa).

A Phosphoserine modification is found at Ser-4. Residues 11 to 98 enclose the Phosphagen kinase N-terminal domain; that stretch reads KLRFPAEDEF…FDPIIEDRHG (88 aa). Thr-35 is subject to Phosphothreonine. Lys-45 is covalently cross-linked (Glycyl lysine isopeptide (Lys-Gly) (interchain with G-Cter in ubiquitin)). Residue Val-72 coordinates creatine. The segment covering 96-110 has biased composition (basic and acidic residues); it reads RHGGYKPSDEHKTDL. Residues 96 to 123 form a disordered region; sequence RHGGYKPSDEHKTDLNPDNLQGGDDLDP. Glycyl lysine isopeptide (Lys-Gly) (interchain with G-Cter in ubiquitin) cross-links involve residues Lys-101 and Lys-107. Tyr-125 bears the Phosphotyrosine mark. Residues 125–367 form the Phosphagen kinase C-terminal domain; that stretch reads YVLSSRVRTG…KLLIEMEQRL (243 aa). Residues 128–132, Arg-130, Arg-132, and His-191 each bind ATP; that span reads SSRVR. The segment at 130–138 is internal MTS-like signal; it reads RVRTGRSIR. At Ser-199 the chain carries Phosphoserine. Glu-232 serves as a coordination point for creatine. An ATP-binding site is contributed by Arg-236. At Tyr-269 the chain carries 3'-nitrotyrosine. Residue Ser-285 participates in creatine binding. Residues Arg-292, 292 to 296, Arg-320, 320 to 325, and Asp-335 each bind ATP; these read RAGVH and RGTGGV. At Thr-322 the chain carries Phosphothreonine. Lys-381 is covalently cross-linked (Glycyl lysine isopeptide (Lys-Gly) (interchain with G-Cter in ubiquitin)).

Belongs to the ATP:guanido phosphotransferase family. As to quaternary structure, dimer of identical or non-identical chains, which can be either B (brain type) or M (muscle type). With MM being the major form in skeletal muscle and myocardium, MB existing in myocardium, and BB existing in many tissues, especially brain. Interacts with SLC12A6 (via C-terminus); the interaction may be required for SLC12A6 potassium-chloride cotransport activity. Ubiquitinated by the ECS(ASB9) complex, leading to its degradation by the proteasome.

It is found in the cytoplasm. It localises to the cytosol. The protein localises to the mitochondrion. Its subcellular location is the cell membrane. It catalyses the reaction creatine + ATP = N-phosphocreatine + ADP + H(+). Functionally, reversibly catalyzes the transfer of phosphate between ATP and various phosphogens (e.g. creatine phosphate). Creatine kinase isoenzymes play a central role in energy transduction in tissues with large, fluctuating energy demands, such as skeletal muscle, heart, brain and spermatozoa. Acts as a key regulator of adaptive thermogenesis as part of the futile creatine cycle: localizes to the mitochondria of thermogenic fat cells and acts by mediating phosphorylation of creatine to initiate a futile cycle of creatine phosphorylation and dephosphorylation. During the futile creatine cycle, creatine and N-phosphocreatine are in a futile cycle, which dissipates the high energy charge of N-phosphocreatine as heat without performing any mechanical or chemical work. This Sus scrofa (Pig) protein is Creatine kinase B-type (CKB).